The sequence spans 591 residues: Aspartate--tRNA ligase (591 aa).

Residue Glu-173 participates in L-aspartate binding. Residues 197–200 (QLFK) are aspartate. Residue Arg-219 participates in L-aspartate binding. Residues 219-221 (RDE) and Gln-228 each bind ATP. Residue His-448 coordinates L-aspartate. Residue Glu-482 participates in ATP binding. An L-aspartate-binding site is contributed by Arg-489. 534–537 (GLDR) contacts ATP.

It belongs to the class-II aminoacyl-tRNA synthetase family. Type 1 subfamily. Homodimer.

It is found in the cytoplasm. It catalyses the reaction tRNA(Asp) + L-aspartate + ATP = L-aspartyl-tRNA(Asp) + AMP + diphosphate. Catalyzes the attachment of L-aspartate to tRNA(Asp) in a two-step reaction: L-aspartate is first activated by ATP to form Asp-AMP and then transferred to the acceptor end of tRNA(Asp). The chain is Aspartate--tRNA ligase from Shewanella sp. (strain MR-7).